Consider the following 273-residue polypeptide: Putative cysteine-rich repeat secretory protein 40 (273 aa).

The signal sequence occupies residues 1–32; sequence MYPSCSLLQRLVWFPFLALVATQLLFIRNVSS. Gnk2-homologous domains lie at 39–141 and 151–264; these read YLHH…SISV and YENN…LYPF.

Belongs to the cysteine-rich repeat secretory protein family.

It is found in the secreted. The protein is Putative cysteine-rich repeat secretory protein 40 (CRRSP40) of Arabidopsis thaliana (Mouse-ear cress).